We begin with the raw amino-acid sequence, 885 residues long: Leucine--tRNA ligase (885 aa).

A 'HIGH' region motif is present at residues 48 to 58 (PYPSGKLHMGH). The 'KMSKS' region motif lies at 639–643 (TMSKS). An ATP-binding site is contributed by K642.

The protein belongs to the class-I aminoacyl-tRNA synthetase family.

Its subcellular location is the cytoplasm. It carries out the reaction tRNA(Leu) + L-leucine + ATP = L-leucyl-tRNA(Leu) + AMP + diphosphate. The chain is Leucine--tRNA ligase from Bordetella avium (strain 197N).